Here is a 601-residue protein sequence, read N- to C-terminus: MEGADLLTAGVLFLFAAVAAVPLAARLGIGAVLGYLLAGIAIGPWGLGFISDVDEILHFSELGVVFLMFIIGLELNPSRLWQLRRSIFGVGAAQVLLSAAVLAGLLMLADFLWQAAVVGGIGLAMSSTAMALQLMREKGMNRSESGQLGFSVLLFQDLAVIPALALVPLLAGSVDEHFDWFKVAMKVLAFAVMLIGGRYLLRPVFRFIAASGVREVFTAATLLLVLSAALFMDALGLSMALGTFIAGVLLAESEYRHELENAIDPFKGLLLGLFFISVGMSLNLGVLYTHLLWVAASVVILVVIKMLTLYLLARLYGIRSSERMQFASVLSQGGEFAFVLFSTASSQRLFQGDQMALLLVTVTLSMMTTPLLMKGIDKWLSRRLNGPEENDEKPWVEDDKPQVIVVGFGRFGQVIARLLMANKMRITVLERDIGAVNLMRKYGYKVYYGDATQVELLRSAGAEAAESIVITCNEPEDTMKLVALCQQHFPHLHILARARGRVEAHELLQAGVTQFSRETFSSALELGRKTLVSLGMHPHQAQRAQLHFRRLDMRMLRELIPEHSDMVQISRAREARRELEEIFQREMQQERRQLDGWDEFE.

13 helical membrane-spanning segments follow: residues 4-24, 29-49, 55-75, 87-107, 111-131, 152-172, 177-197, 207-227, 230-250, 262-282, 284-304, 324-344, and 356-376; these read ADLLTAGVLFLFAAVAAVPLA, IGAVLGYLLAGIAIGPWGLGF, EILHFSELGVVFLMFIIGLEL, IFGVGAAQVLLSAAVLAGLLM, FLWQAAVVGGIGLAMSSTAMA, VLLFQDLAVIPALALVPLLAG, HFDWFKVAMKVLAFAVMLIGG, FIAASGVREVFTAATLLLVLS, LFMDALGLSMALGTFIAGVLL, AIDPFKGLLLGLFFISVGMSL, LGVLYTHLLWVAASVVILVVI, MQFASVLSQGGEFAFVLFSTA, and ALLLVTVTLSMMTTPLLMKGI. The RCK N-terminal domain occupies 400–519; sequence KPQVIVVGFG…AGVTQFSRET (120 aa).

Belongs to the monovalent cation:proton antiporter 2 (CPA2) transporter (TC 2.A.37) family. KefB subfamily. In terms of assembly, interacts with the regulatory subunit KefG.

Its subcellular location is the cell inner membrane. Functionally, pore-forming subunit of a potassium efflux system that confers protection against electrophiles. Catalyzes K(+)/H(+) antiport. The chain is Glutathione-regulated potassium-efflux system protein KefB from Salmonella heidelberg (strain SL476).